The primary structure comprises 304 residues: MNWITNYVRPKINSMLGRREVPENLWIKCPETGEMVFHRDLEENKWVIPQSGHHMKMPARARLKDLFDGGIYETLPQPKVAQDPLKFRDSKKYLDRLRDSRAKTELEDTIVAGLGLVQGVKLVAVVHEFNFIGGSLGMAAGEAIIRAFEKAIAEKCPLVMFPASGGARMQEGILSLMQLPRTTVAVNLLKEAGLPYIVVLTNPTTGGVTASYAMLGDIHLAEPGAEIGFAGKRVIEQTLREKLPDGFQTSEYLLEHGMVDMVVKRHDLPATLARVLKILMKKPVEAARRESGSQVSALPVAARA.

The CoA carboxyltransferase N-terminal domain maps to 25-294; that stretch reads LWIKCPETGE…EAARRESGSQ (270 aa).

Belongs to the AccD/PCCB family. In terms of assembly, acetyl-CoA carboxylase is a heterohexamer composed of biotin carboxyl carrier protein (AccB), biotin carboxylase (AccC) and two subunits each of ACCase subunit alpha (AccA) and ACCase subunit beta (AccD).

Its subcellular location is the cytoplasm. The catalysed reaction is N(6)-carboxybiotinyl-L-lysyl-[protein] + acetyl-CoA = N(6)-biotinyl-L-lysyl-[protein] + malonyl-CoA. The protein operates within lipid metabolism; malonyl-CoA biosynthesis; malonyl-CoA from acetyl-CoA: step 1/1. Functionally, component of the acetyl coenzyme A carboxylase (ACC) complex. Biotin carboxylase (BC) catalyzes the carboxylation of biotin on its carrier protein (BCCP) and then the CO(2) group is transferred by the transcarboxylase to acetyl-CoA to form malonyl-CoA. This Sinorhizobium fredii (strain NBRC 101917 / NGR234) protein is Acetyl-coenzyme A carboxylase carboxyl transferase subunit beta.